Here is a 432-residue protein sequence, read N- to C-terminus: Tyrosine-protein phosphatase non-receptor type 1 (432 aa).

Position 1 is an N-acetylmethionine (methionine 1). One can recognise a Tyrosine-protein phosphatase domain in the interval 3-277 (MEKEFEEIDK…RFSYLAVIEG (275 aa)). Tyrosine 20 is subject to Phosphotyrosine. Phosphoserine; by CLK1, CLK2 and PKB/AKT1 or PKB/AKT2 is present on serine 50. Position 66 is a phosphotyrosine; by EGFR (tyrosine 66). Substrate is bound by residues aspartate 181 and 215–221 (CSAGIGR). Cysteine 215 serves as the catalytic Phosphocysteine intermediate. Cysteine 215 bears the Cysteine persulfide mark. The residue at position 215 (cysteine 215) is an S-nitrosocysteine; in reversibly inhibited form. Phosphoserine; by CLK1 and CLK2 is present on residues serine 242 and serine 243. Glutamine 262 contributes to the substrate binding site. Disordered stretches follow at residues 297-322 (EDLDLPPEHVPPPPRPPKRTLEPHNG) and 335-399 (SEET…EEHK). Serine 335, serine 362, and serine 364 each carry phosphoserine. Positions 354–364 (SSAMHSVSSMS) are enriched in low complexity. At threonine 367 the chain carries Phosphothreonine.

It belongs to the protein-tyrosine phosphatase family. Non-receptor class 1 subfamily. As to quaternary structure, interacts with EPHA3 (phosphorylated); dephosphorylates EPHA3 and may regulate its trafficking and function. Interacts with MET. Interacts with NCK1. In terms of processing, ser-50 is the major site of phosphorylation as compared to Ser-242 and Ser-243. Activated by phosphorylation at Ser-50. S-nitrosylation of Cys-215 inactivates the enzyme activity. Post-translationally, sulfhydration at Cys-215 following endoplasmic reticulum stress inactivates the enzyme activity, promoting EIF2AK3/PERK activity. As to expression, most abundant in testis. Also found in kidney, spleen, muscle, liver, heart and brain.

It localises to the endoplasmic reticulum membrane. The catalysed reaction is O-phospho-L-tyrosyl-[protein] + H2O = L-tyrosyl-[protein] + phosphate. In terms of biological role, tyrosine-protein phosphatase which acts as a regulator of endoplasmic reticulum unfolded protein response. Mediates dephosphorylation of EIF2AK3/PERK; inactivating the protein kinase activity of EIF2AK3/PERK. May play an important role in CKII- and p60c-src-induced signal transduction cascades. May regulate the EFNA5-EPHA3 signaling pathway which modulates cell reorganization and cell-cell repulsion. May also regulate the hepatocyte growth factor receptor signaling pathway through dephosphorylation of MET. The protein is Tyrosine-protein phosphatase non-receptor type 1 (Ptpn1) of Mus musculus (Mouse).